The chain runs to 358 residues: CD209 antigen (358 aa).

The Cytoplasmic segment spans residues 1–37; that stretch reads MSDSKEPRLQQLGLLEEEQLRGVGFRQTRGYKSLAGC. 3 short sequence motifs (endocytosis signal) span residues 14-15, 16-18, and 31-34; these read LL, EEE, and YKSL. Residues 38-58 form a helical; Signal-anchor for type II membrane protein membrane-spanning segment; that stretch reads LGHGPLVLQLLSFTLLAGLLV. The Extracellular portion of the chain corresponds to 59-358; sequence QVSKVPSSLS…APTTPNPPPE (300 aa). Asn-80 carries an N-linked (GlcNAc...) asparagine glycan. A run of 5 repeats spans residues 96–118, 119–141, 142–164, 165–187, and 188–211. A 5 X approximate tandem repeats region spans residues 96–280; sequence KLQEIYQELT…GLSDLNHEGT (185 aa). Disulfide bonds link Cys-210–Cys-221, Cys-238–Cys-331, and Cys-310–Cys-323. Residues 217–332 form the C-type lectin domain; it reads FQGNCYFMSN…CNLAKFWICK (116 aa). Residues Glu-301, Asn-303, Ile-305, Glu-308, Asn-319, and Asp-320 each coordinate Ca(2+). A disordered region spans residues 336–358; the sequence is ASCSGDEERLLSPAPTTPNPPPE.

As to quaternary structure, homotetramer. Interacts with C1QBP; the interaction is indicative for a C1q:C1QBP:CD209 signaling complex. Interacts with ICAM2 and ICAM3 by binding to mannose-like carbohydrates. Interacts (via C-type lectin domain) with CEACAM1 (via Lewis X moieties); this interaction is regulated by the glycosylation pattern of CEACAM1 on cell types and regulates contact between dendritic cells and neutrophils.

It is found in the membrane. Functionally, pathogen-recognition receptor expressed on the surface of immature dendritic cells (DCs) and involved in initiation of primary immune response. Thought to mediate the endocytosis of pathogens which are subsequently degraded in lysosomal compartments. The receptor returns to the cell membrane surface and the pathogen-derived antigens are presented to resting T-cells via MHC class II proteins to initiate the adaptive immune response. Probably recognizes in a calcium-dependent manner high mannose N-linked oligosaccharides in a variety of pathogen antigens. On DCs it is a high affinity receptor for ICAM2 and ICAM3 by binding to mannose-like carbohydrates. May act as a DC rolling receptor that mediates transendothelial migration of DC presursors from blood to tissues by binding endothelial ICAM2. Seems to regulate DC-induced T-cell proliferation by binding to ICAM3 on T-cells in the immunological synapse formed between DC and T-cells. This chain is CD209 antigen (CD209), found in Papio hamadryas (Hamadryas baboon).